The chain runs to 234 residues: Phosphoribosylaminoimidazole-succinocarboxamide synthase (234 aa).

This sequence belongs to the SAICAR synthetase family.

The catalysed reaction is 5-amino-1-(5-phospho-D-ribosyl)imidazole-4-carboxylate + L-aspartate + ATP = (2S)-2-[5-amino-1-(5-phospho-beta-D-ribosyl)imidazole-4-carboxamido]succinate + ADP + phosphate + 2 H(+). The protein operates within purine metabolism; IMP biosynthesis via de novo pathway; 5-amino-1-(5-phospho-D-ribosyl)imidazole-4-carboxamide from 5-amino-1-(5-phospho-D-ribosyl)imidazole-4-carboxylate: step 1/2. The chain is Phosphoribosylaminoimidazole-succinocarboxamide synthase from Streptococcus pyogenes serotype M3 (strain ATCC BAA-595 / MGAS315).